The following is a 417-amino-acid chain: Serine hydroxymethyltransferase (417 aa).

(6S)-5,6,7,8-tetrahydrofolate is bound by residues leucine 122 and 126-128 (GHL). Lysine 230 carries the post-translational modification N6-(pyridoxal phosphate)lysine. 355–357 (SPF) contacts (6S)-5,6,7,8-tetrahydrofolate.

This sequence belongs to the SHMT family. In terms of assembly, homodimer. Pyridoxal 5'-phosphate serves as cofactor.

The protein localises to the cytoplasm. The enzyme catalyses (6R)-5,10-methylene-5,6,7,8-tetrahydrofolate + glycine + H2O = (6S)-5,6,7,8-tetrahydrofolate + L-serine. The protein operates within one-carbon metabolism; tetrahydrofolate interconversion. It participates in amino-acid biosynthesis; glycine biosynthesis; glycine from L-serine: step 1/1. Its function is as follows. Catalyzes the reversible interconversion of serine and glycine with tetrahydrofolate (THF) serving as the one-carbon carrier. This reaction serves as the major source of one-carbon groups required for the biosynthesis of purines, thymidylate, methionine, and other important biomolecules. Also exhibits THF-independent aldolase activity toward beta-hydroxyamino acids, producing glycine and aldehydes, via a retro-aldol mechanism. The polypeptide is Serine hydroxymethyltransferase (Francisella tularensis subsp. novicida (strain U112)).